Here is a 499-residue protein sequence, read N- to C-terminus: Hepatic triacylglycerol lipase (499 aa).

An N-terminal signal peptide occupies residues 1–21; it reads MGSPLCVPIFLAVCILIQSST. Residue asparagine 78 is glycosylated (N-linked (GlcNAc...) asparagine). Serine 168 acts as the Nucleophile in catalysis. The active-site Charge relay system is aspartate 194. The interval 254–277 is essential for determining substrate specificity; that stretch reads CHFLELYKHIAQHGLNALSQTIKC. Histidine 279 (charge relay system) is an active-site residue. The 135-residue stretch at 352-486 folds into the PLAT domain; sequence YHYQFKIQFI…HPTQEKNFVR (135 aa). N-linked (GlcNAc...) asparagine glycosylation occurs at asparagine 397.

It belongs to the AB hydrolase superfamily. Lipase family. In terms of assembly, homodimer.

It localises to the secreted. The catalysed reaction is a triacylglycerol + H2O = a diacylglycerol + a fatty acid + H(+). It carries out the reaction a 1-acyl-sn-glycero-3-phosphocholine + H2O = sn-glycerol 3-phosphocholine + a fatty acid + H(+). The enzyme catalyses a 1,2-diacyl-sn-glycero-3-phosphocholine + H2O = a 2-acyl-sn-glycero-3-phosphocholine + a fatty acid + H(+). It catalyses the reaction 1,2,3-tri-(9Z-octadecenoyl)-glycerol + H2O = di-(9Z)-octadecenoylglycerol + (9Z)-octadecenoate + H(+). The catalysed reaction is 1,2-di-(9Z-octadecenoyl)-sn-glycero-3-phosphocholine + H2O = (9Z-octadecenoyl)-sn-glycero-3-phosphocholine + (9Z)-octadecenoate + H(+). It carries out the reaction 1,2,3-tributanoylglycerol + H2O = dibutanoylglycerol + butanoate + H(+). The enzyme catalyses 1,2-dihexadecanoyl-sn-glycero-3-phosphocholine + H2O = hexadecanoyl-sn-glycero-3-phosphocholine + hexadecanoate + H(+). It catalyses the reaction 1,2-di-(9Z-octadecenoyl)-sn-glycerol + H2O = 2-(9Z-octadecenoyl)-glycerol + (9Z)-octadecenoate + H(+). The catalysed reaction is 1,2,3-tri-(9Z-octadecenoyl)-glycerol + H2O = 2,3-di-(9Z)-octadecenoyl-sn-glycerol + (9Z)-octadecenoate + H(+). It carries out the reaction 1-(9Z-octadecenoyl)-sn-glycero-3-phospho-L-serine + H2O = sn-glycero-3-phospho-L-serine + (9Z)-octadecenoate + H(+). The enzyme catalyses 1-hexadecanoyl-sn-glycero-3-phosphocholine + H2O = sn-glycerol 3-phosphocholine + hexadecanoate + H(+). It catalyses the reaction 1,3-di-(9Z-octadecenoyl)-glycerol + H2O = 3-(9Z-octadecenoyl)-sn-glycerol + (9Z)-octadecenoate + H(+). In terms of biological role, catalyzes the hydrolysis of triglycerides and phospholipids present in circulating plasma lipoproteins, including chylomicrons, intermediate density lipoproteins (IDL), low density lipoproteins (LDL) of large size and high density lipoproteins (HDL), releasing free fatty acids (FFA) and smaller lipoprotein particles. Also exhibits lysophospholipase activity. Can hydrolyze both neutral lipid and phospholipid substrates but shows a greater binding affinity for neutral lipid substrates than phospholipid substrates. In native LDL, preferentially hydrolyzes the phosphatidylcholine species containing polyunsaturated fatty acids at sn-2 position. The protein is Hepatic triacylglycerol lipase (LIPC) of Oryctolagus cuniculus (Rabbit).